Consider the following 332-residue polypeptide: Leucine carboxyl methyltransferase 1 homolog (332 aa).

S-adenosyl-L-methionine-binding positions include Lys-22, Arg-57, Gly-83, Asp-107, 153–154 (DL), and Glu-180.

It belongs to the methyltransferase superfamily. LCMT family.

The protein localises to the cytoplasm. It localises to the membrane. It catalyses the reaction [phosphatase 2A protein]-C-terminal L-leucine + S-adenosyl-L-methionine = [phosphatase 2A protein]-C-terminal L-leucine methyl ester + S-adenosyl-L-homocysteine. In terms of biological role, methylates the carboxyl group of the C-terminal leucine residue of protein phosphatase 2A (PP2A) catalytic subunits to form alpha-leucine ester residues. Involved in brassinosteroid (BR) signaling. Plays a negative role in BR signaling pathway. Functions as a positive regulator of BRI1 receptor-kinase degradation. Methylates PP2A, thus facilitating its association with activated BRI1. This leads to receptor dephosphorylation and degradation, and thus to the termination of BR signaling. May act upstream of ASK7/BIN2. Involved in methylation of PP2A during environmental stress responses. The sequence is that of Leucine carboxyl methyltransferase 1 homolog from Arabidopsis thaliana (Mouse-ear cress).